The primary structure comprises 178 residues: ATP synthase subunit delta (178 aa).

The protein belongs to the ATPase delta chain family. F-type ATPases have 2 components, F(1) - the catalytic core - and F(0) - the membrane proton channel. F(1) has five subunits: alpha(3), beta(3), gamma(1), delta(1), epsilon(1). F(0) has three main subunits: a(1), b(2) and c(10-14). The alpha and beta chains form an alternating ring which encloses part of the gamma chain. F(1) is attached to F(0) by a central stalk formed by the gamma and epsilon chains, while a peripheral stalk is formed by the delta and b chains.

It localises to the cell inner membrane. Functionally, f(1)F(0) ATP synthase produces ATP from ADP in the presence of a proton or sodium gradient. F-type ATPases consist of two structural domains, F(1) containing the extramembraneous catalytic core and F(0) containing the membrane proton channel, linked together by a central stalk and a peripheral stalk. During catalysis, ATP synthesis in the catalytic domain of F(1) is coupled via a rotary mechanism of the central stalk subunits to proton translocation. Its function is as follows. This protein is part of the stalk that links CF(0) to CF(1). It either transmits conformational changes from CF(0) to CF(1) or is implicated in proton conduction. The chain is ATP synthase subunit delta from Hydrogenovibrio crunogenus (strain DSM 25203 / XCL-2) (Thiomicrospira crunogena).